A 292-amino-acid polypeptide reads, in one-letter code: Large ribosomal subunit protein bL19m (292 aa).

The segment at 40–61 is disordered; the sequence is PVRQQSTGPSEPGAFQPPPKPV. S77 bears the Phosphoserine mark.

The protein belongs to the bacterial ribosomal protein bL19 family. In terms of assembly, component of the mitochondrial ribosome large subunit (39S) which comprises a 16S rRNA and about 50 distinct proteins.

The protein localises to the mitochondrion. In Pongo abelii (Sumatran orangutan), this protein is Large ribosomal subunit protein bL19m (MRPL19).